A 481-amino-acid chain; its full sequence is Glutamate mutase epsilon subunit (481 aa).

Position 67 (R67) interacts with L-glutamate. Adenosylcob(III)alamin is bound at residue G69. Residue R99 participates in L-glutamate binding. N122 contacts adenosylcob(III)alamin. Residues 148-149 (RH), E170, and Y176 each bind L-glutamate. An adenosylcob(III)alamin-binding site is contributed by P179. Y180 serves as a coordination point for L-glutamate. Positions 296, 325, 329, and 333 each coordinate adenosylcob(III)alamin.

It belongs to the methylaspartate mutase GlmE subunit family. Heterotetramer composed of 2 epsilon subunits (GlmE) and 2 sigma subunits (GlmS). GlmE exists as a homodimer and GlmS as a monomer. Requires adenosylcob(III)alamin as cofactor.

The catalysed reaction is (2S,3S)-3-methyl-L-aspartate = L-glutamate. Its pathway is amino-acid degradation; L-glutamate degradation via mesaconate pathway; acetate and pyruvate from L-glutamate: step 1/4. Functionally, catalyzes the carbon skeleton rearrangement of L-glutamate to L-threo-3-methylaspartate ((2S,3S)-3-methylaspartate). The chain is Glutamate mutase epsilon subunit from Escherichia coli O157:H7.